The following is a 38-amino-acid chain: MIEPLLLGIVLGLIPITLAGLFVAAYLQYKRGNQLNID.

A helical membrane pass occupies residues 5-25; that stretch reads LLLGIVLGLIPITLAGLFVAA.

The protein belongs to the PetG family. The 4 large subunits of the cytochrome b6-f complex are cytochrome b6, subunit IV (17 kDa polypeptide, PetD), cytochrome f and the Rieske protein, while the 4 small subunits are PetG, PetL, PetM and PetN. The complex functions as a dimer.

It is found in the cellular thylakoid membrane. Functionally, component of the cytochrome b6-f complex, which mediates electron transfer between photosystem II (PSII) and photosystem I (PSI), cyclic electron flow around PSI, and state transitions. PetG is required for either the stability or assembly of the cytochrome b6-f complex. The polypeptide is Cytochrome b6-f complex subunit 5 (Rippkaea orientalis (strain PCC 8801 / RF-1) (Cyanothece sp. (strain PCC 8801))).